A 253-amino-acid polypeptide reads, in one-letter code: 3-deoxy-manno-octulosonate cytidylyltransferase (253 aa).

The protein belongs to the KdsB family.

Its subcellular location is the cytoplasm. The enzyme catalyses 3-deoxy-alpha-D-manno-oct-2-ulosonate + CTP = CMP-3-deoxy-beta-D-manno-octulosonate + diphosphate. It functions in the pathway nucleotide-sugar biosynthesis; CMP-3-deoxy-D-manno-octulosonate biosynthesis; CMP-3-deoxy-D-manno-octulosonate from 3-deoxy-D-manno-octulosonate and CTP: step 1/1. It participates in bacterial outer membrane biogenesis; lipopolysaccharide biosynthesis. Functionally, activates KDO (a required 8-carbon sugar) for incorporation into bacterial lipopolysaccharide in Gram-negative bacteria. The chain is 3-deoxy-manno-octulosonate cytidylyltransferase from Neisseria meningitidis serogroup A / serotype 4A (strain DSM 15465 / Z2491).